The following is a 466-amino-acid chain: Asparagine--tRNA ligase (466 aa).

The protein belongs to the class-II aminoacyl-tRNA synthetase family. In terms of assembly, homodimer.

It is found in the cytoplasm. It catalyses the reaction tRNA(Asn) + L-asparagine + ATP = L-asparaginyl-tRNA(Asn) + AMP + diphosphate + H(+). In Psychromonas ingrahamii (strain DSM 17664 / CCUG 51855 / 37), this protein is Asparagine--tRNA ligase.